The sequence spans 315 residues: uncharacterized protein (315 aa).

The next 3 helical transmembrane spans lie at isoleucine 18–glycine 38, isoleucine 202–isoleucine 222, and leucine 244–leucine 264. The interval valine 288–alanine 315 is disordered.

It is found in the membrane. This is an uncharacterized protein from Saccharomyces cerevisiae (strain ATCC 204508 / S288c) (Baker's yeast).